The sequence spans 180 residues: Large ribosomal subunit protein uL6 (180 aa).

Belongs to the universal ribosomal protein uL6 family. Part of the 50S ribosomal subunit.

Functionally, this protein binds to the 23S rRNA, and is important in its secondary structure. It is located near the subunit interface in the base of the L7/L12 stalk, and near the tRNA binding site of the peptidyltransferase center. This is Large ribosomal subunit protein uL6 from Dictyoglomus thermophilum (strain ATCC 35947 / DSM 3960 / H-6-12).